A 350-amino-acid chain; its full sequence is Dihydroorotate dehydrogenase (quinone) (350 aa).

FMN contacts are provided by residues 65–69 (AGLDK) and threonine 89. Lysine 69 contacts substrate. Residue 114–118 (NRLGF) coordinates substrate. 2 residues coordinate FMN: asparagine 149 and asparagine 182. Asparagine 182 provides a ligand contact to substrate. Catalysis depends on serine 185, which acts as the Nucleophile. Asparagine 187 is a binding site for substrate. The FMN site is built by lysine 227 and threonine 255. 256–257 (NT) lines the substrate pocket. FMN-binding positions include glycine 278, glycine 307, and 328 to 329 (YT).

Belongs to the dihydroorotate dehydrogenase family. Type 2 subfamily. Monomer. It depends on FMN as a cofactor.

Its subcellular location is the cell membrane. The catalysed reaction is (S)-dihydroorotate + a quinone = orotate + a quinol. It participates in pyrimidine metabolism; UMP biosynthesis via de novo pathway; orotate from (S)-dihydroorotate (quinone route): step 1/1. In terms of biological role, catalyzes the conversion of dihydroorotate to orotate with quinone as electron acceptor. The polypeptide is Dihydroorotate dehydrogenase (quinone) (Polaromonas naphthalenivorans (strain CJ2)).